An 81-amino-acid chain; its full sequence is Probable antimicrobial peptide Con13 (81 aa).

Residues 1–22 (MNRKLLLVFLVVAMLVMQPAEA) form the signal peptide. Residues 66-81 (EAGQIPFDEFMDVLYS) constitute a propeptide that is removed on maturation.

Belongs to the non-disulfide-bridged peptide (NDBP) superfamily. Long chain multifunctional peptide (group 2) family. In terms of tissue distribution, expressed by the venom gland.

It is found in the secreted. Its subcellular location is the target cell membrane. At high concentrations, acts as a pore former in cellular membranes and causes the leakage of the cells. At submicromolar concentrations, degranulates granulocytes and has a weak hemolytic activity against human erythrocytes. Also strongly inhibits the production of superoxide anions. Has a strong antibacterial activity against Gram-negative bacteria but is less active against Gram-positive bacteria. Also has antifungal activity. This chain is Probable antimicrobial peptide Con13, found in Opisthacanthus cayaporum (South American scorpion).